The sequence spans 801 residues: Conserved oligomeric Golgi complex subunit 4 (801 aa).

A disordered region spans residues 397 to 427 (IRSPSGDGDDEENEEARQERHRLRKEAKEQK).

The protein belongs to the COG4 family. Component of the conserved oligomeric Golgi complex which is composed of eight different subunits and is required for normal Golgi morphology and localization.

The protein localises to the golgi apparatus membrane. Functionally, required for normal Golgi function. The sequence is that of Conserved oligomeric Golgi complex subunit 4 (cogc-4) from Caenorhabditis elegans.